The primary structure comprises 261 residues: Mannose-specific lectin 2 (261 aa).

The first 23 residues, 1–23 (MAKLLLFLLPAILGLLIPRSAVA), serve as a signal peptide directing secretion. Bulb-type lectin domains are found at residues 26-131 (TNYL…PWVP) and 145-252 (DNLL…SKRS). Beta-D-mannose is bound by residues 51–55 (QNDCN), Y59, W63, Q64, 170–174 (QGDCN), Y178, and 182–185 (YGWQ). The Carbohydrate-binding motif 1 signature appears at 51–59 (QNDCNLVLY). Cystine bridges form between C54–C74 and C173–C195. The Carbohydrate-binding motif 2 signature appears at 170–178 (QGDCNLVLY).

As to quaternary structure, forms heterotetramer of 2 chains 1 and 2 chains 2 arranged as a dimer of chain 1 and chain 2 heterodimers.

Its function is as follows. Mannose-specific lectin. Shows agglutinating activity towards erythrocytes from rabbit. This is Mannose-specific lectin 2 from Colocasia esculenta (Wild taro).